The following is a 160-amino-acid chain: Snaclec subunit A (160 aa).

The N-terminal stretch at 1–23 (MGRFILVNLGLLVVAFSLRGSEA) is a signal peptide. Cystine bridges form between Cys-25–Cys-36, Cys-53–Cys-150, and Cys-125–Cys-142. The C-type lectin domain maps to 32–151 (YDKYCYKVFD…CDFTLPFICK (120 aa)).

This sequence belongs to the snaclec family. As to quaternary structure, heterodimer of subunits A and B; disulfide-linked. As to expression, expressed by the venom gland.

It localises to the secreted. In terms of biological role, interferes with one step of hemostasis (modulation of platelet aggregation, or coagulation cascade, for example). The chain is Snaclec subunit A from Philodryas olfersii (Green snake).